Here is a 345-residue protein sequence, read N- to C-terminus: Phenylalanine--tRNA ligase alpha subunit (345 aa).

E259 is a binding site for Mg(2+).

Belongs to the class-II aminoacyl-tRNA synthetase family. Phe-tRNA synthetase alpha subunit type 1 subfamily. Tetramer of two alpha and two beta subunits. Mg(2+) serves as cofactor.

The protein resides in the cytoplasm. It carries out the reaction tRNA(Phe) + L-phenylalanine + ATP = L-phenylalanyl-tRNA(Phe) + AMP + diphosphate + H(+). The chain is Phenylalanine--tRNA ligase alpha subunit from Lactococcus lactis subsp. cremoris (strain MG1363).